We begin with the raw amino-acid sequence, 371 residues long: Outer membrane protein P2 (371 aa).

The N-terminal stretch at 1–20 (MKKTLAALIVGAFAASAANA) is a signal peptide.

This sequence belongs to the Gram-negative porin family. In terms of assembly, homotrimer.

The protein localises to the cell outer membrane. Functionally, forms pores that allow passive diffusion of small molecules across the outer membrane. This chain is Outer membrane protein P2 (ompP2), found in Haemophilus influenzae.